The sequence spans 90 residues: Probable Fe(2+)-trafficking protein (90 aa).

It belongs to the Fe(2+)-trafficking protein family.

In terms of biological role, could be a mediator in iron transactions between iron acquisition and iron-requiring processes, such as synthesis and/or repair of Fe-S clusters in biosynthetic enzymes. The protein is Probable Fe(2+)-trafficking protein of Coxiella burnetii (strain CbuG_Q212) (Coxiella burnetii (strain Q212)).